The following is a 367-amino-acid chain: Molybdopterin synthase catalytic subunit (367 aa).

Substrate contacts are provided by residues His-101–Arg-102, Lys-117, and Lys-124–Glu-126.

This sequence belongs to the MoaE family. MOCS2B subfamily. In terms of assembly, heterotetramer; composed of 2 small (Mocs2A) and 2 large (Mocs2B) subunits.

It is found in the cytoplasm. The enzyme catalyses 2 [molybdopterin-synthase sulfur-carrier protein]-C-terminal-Gly-aminoethanethioate + cyclic pyranopterin phosphate + H2O = molybdopterin + 2 [molybdopterin-synthase sulfur-carrier protein]-C-terminal Gly-Gly + 2 H(+). It participates in cofactor biosynthesis; molybdopterin biosynthesis. Catalytic subunit of the molybdopterin synthase complex, a complex that catalyzes the conversion of precursor Z into molybdopterin. Acts by mediating the incorporation of 2 sulfur atoms from thiocarboxylated Mocs2A into precursor Z to generate a dithiolene group. The protein is Molybdopterin synthase catalytic subunit of Drosophila erecta (Fruit fly).